Reading from the N-terminus, the 263-residue chain is Indole-3-glycerol phosphate synthase (263 aa).

Belongs to the TrpC family.

The enzyme catalyses 1-(2-carboxyphenylamino)-1-deoxy-D-ribulose 5-phosphate + H(+) = (1S,2R)-1-C-(indol-3-yl)glycerol 3-phosphate + CO2 + H2O. It functions in the pathway amino-acid biosynthesis; L-tryptophan biosynthesis; L-tryptophan from chorismate: step 4/5. The protein is Indole-3-glycerol phosphate synthase of Desulfosudis oleivorans (strain DSM 6200 / JCM 39069 / Hxd3) (Desulfococcus oleovorans).